The primary structure comprises 708 residues: Wall-associated receptor kinase-like 14 (708 aa).

The N-terminal stretch at 1-42 is a signal peptide; the sequence is MLRSIFDFNQRSTKMVMISHKLDLILVFIIVIGGSIFRRVSA. N-linked (GlcNAc...) asparagine glycosylation is found at asparagine 43, asparagine 88, asparagine 101, asparagine 131, asparagine 158, asparagine 167, and asparagine 184. Residues 43-285 are Extracellular-facing; sequence NFTVPCNGRC…WRHCRSNLIT (243 aa). The chain crosses the membrane as a helical span at residues 286–306; sequence IVGGTVGGAFLLAALAFFFFC. Residues 307-708 are Cytoplasmic-facing; the sequence is KRRRSTPLRS…TNTLLGNIPR (402 aa). A Protein kinase domain is found at 348 to 629; it reads FSEKQKLGIG…LEQIRLSGWI (282 aa). ATP contacts are provided by residues 354 to 362 and lysine 376; that span reads LGIGAYGTV. The active-site Proton acceptor is aspartate 472. 2 disordered regions span residues 636–659 and 686–708; these read SPAG…SIGS and VQDP…NIPR. The segment covering 643-652 has biased composition (basic and acidic residues); the sequence is SSDRGSERSV. Over residues 692–708 the composition is skewed to polar residues; the sequence is SAQSSPSTNTLLGNIPR.

Belongs to the protein kinase superfamily. Ser/Thr protein kinase family.

Its subcellular location is the membrane. It carries out the reaction L-seryl-[protein] + ATP = O-phospho-L-seryl-[protein] + ADP + H(+). The catalysed reaction is L-threonyl-[protein] + ATP = O-phospho-L-threonyl-[protein] + ADP + H(+). Its function is as follows. Serine/threonine-protein kinase that may function as a signaling receptor of extracellular matrix component. The sequence is that of Wall-associated receptor kinase-like 14 (WAKL14) from Arabidopsis thaliana (Mouse-ear cress).